Reading from the N-terminus, the 429-residue chain is 3-phosphoshikimate 1-carboxyvinyltransferase (429 aa).

The 3-phosphoshikimate site is built by K23, S24, and R28. A phosphoenolpyruvate-binding site is contributed by K23. 2 residues coordinate phosphoenolpyruvate: G95 and R123. Positions 168, 170, 316, and 343 each coordinate 3-phosphoshikimate. Q170 contributes to the phosphoenolpyruvate binding site. D316 acts as the Proton acceptor in catalysis. R347 and R389 together coordinate phosphoenolpyruvate.

It belongs to the EPSP synthase family. Monomer.

It localises to the cytoplasm. The enzyme catalyses 3-phosphoshikimate + phosphoenolpyruvate = 5-O-(1-carboxyvinyl)-3-phosphoshikimate + phosphate. It participates in metabolic intermediate biosynthesis; chorismate biosynthesis; chorismate from D-erythrose 4-phosphate and phosphoenolpyruvate: step 6/7. Its function is as follows. Catalyzes the transfer of the enolpyruvyl moiety of phosphoenolpyruvate (PEP) to the 5-hydroxyl of shikimate-3-phosphate (S3P) to produce enolpyruvyl shikimate-3-phosphate and inorganic phosphate. The polypeptide is 3-phosphoshikimate 1-carboxyvinyltransferase (Bacillus thuringiensis subsp. konkukian (strain 97-27)).